Reading from the N-terminus, the 113-residue chain is T cell receptor alpha variable 8-3 (113 aa).

The first 20 residues, 1–20 (MLLELIPLLGIHFVLRTARA), serve as a signal peptide directing secretion. The Ig-like domain occupies 21 to 113 (QSVTQPDIHI…DAAEYFCAVG (93 aa)). Cys42 and Cys110 form a disulfide bridge. N-linked (GlcNAc...) asparagine glycosylation is present at Asn43.

As to quaternary structure, alpha-beta TR is a heterodimer composed of an alpha and beta chain; disulfide-linked. The alpha-beta TR is associated with the transmembrane signaling CD3 coreceptor proteins to form the TR-CD3 (TcR or TCR). The assembly of alpha-beta TR heterodimers with CD3 occurs in the endoplasmic reticulum where a single alpha-beta TR heterodimer associates with one CD3D-CD3E heterodimer, one CD3G-CD3E heterodimer and one CD247 homodimer forming a stable octameric structure. CD3D-CD3E and CD3G-CD3E heterodimers preferentially associate with TR alpha and TR beta chains, respectively. The association of the CD247 homodimer is the last step of TcR assembly in the endoplasmic reticulum and is required for transport to the cell surface.

It localises to the cell membrane. V region of the variable domain of T cell receptor (TR) alpha chain that participates in the antigen recognition. Alpha-beta T cell receptors are antigen specific receptors which are essential to the immune response and are present on the cell surface of T lymphocytes. Recognize peptide-major histocompatibility (MH) (pMH) complexes that are displayed by antigen presenting cells (APC), a prerequisite for efficient T cell adaptive immunity against pathogens. Binding of alpha-beta TR to pMH complex initiates TR-CD3 clustering on the cell surface and intracellular activation of LCK that phosphorylates the ITAM motifs of CD3G, CD3D, CD3E and CD247 enabling the recruitment of ZAP70. In turn ZAP70 phosphorylates LAT, which recruits numerous signaling molecules to form the LAT signalosome. The LAT signalosome propagates signal branching to three major signaling pathways, the calcium, the mitogen-activated protein kinase (MAPK) kinase and the nuclear factor NF-kappa-B (NF-kB) pathways, leading to the mobilization of transcription factors that are critical for gene expression and essential for T cell growth and differentiation. The T cell repertoire is generated in the thymus, by V-(D)-J rearrangement. This repertoire is then shaped by intrathymic selection events to generate a peripheral T cell pool of self-MH restricted, non-autoaggressive T cells. Post-thymic interaction of alpha-beta TR with the pMH complexes shapes TR structural and functional avidity. The chain is T cell receptor alpha variable 8-3 from Homo sapiens (Human).